Here is an 831-residue protein sequence, read N- to C-terminus: Intraflagellar transport protein 88 (831 aa).

11 TPR repeats span residues 68–101 (IFKL…EQKV), 120–153 (TCIW…AEGA), 156–189 (AQIR…ASPS), 248–281 (FDPL…SILI), 492–525 (RGVH…DPYD), 526–559 (SFAH…NMES), 560–593 (VQAT…LPSY), 595–627 (DAIY…FSAV), 632–665 (PSIY…VPFS), 666–699 (LAVI…DTTT), and 700–733 (PKWS…FPTN). The tract at residues 785–816 (RRNSVAAVGPGSRAGQDRFEASNNRVSSNTGD) is disordered. A compositionally biased stretch (polar residues) spans 805–815 (ASNNRVSSNTG).

It is found in the cell projection. Its subcellular location is the cilium. It localises to the flagellum. The protein resides in the cytoplasm. The protein localises to the cytoskeleton. It is found in the flagellum axoneme. Its subcellular location is the flagellum basal body. In terms of biological role, component of the intraflagellar transport complex B (IFT-B) involved in flagellar assembly. The sequence is that of Intraflagellar transport protein 88 from Giardia intestinalis (strain ATCC 50803 / WB clone C6) (Giardia lamblia).